The chain runs to 324 residues: UDP-N-acetylenolpyruvoylglucosamine reductase (324 aa).

Residues 36 to 203 (FRAGGLAELM…TSVLFEGYPE (168 aa)) enclose the FAD-binding PCMH-type domain. Arg-183 is an active-site residue. The active-site Proton donor is the Ser-232. Residue Glu-302 is part of the active site.

The protein belongs to the MurB family. It depends on FAD as a cofactor.

The protein resides in the cytoplasm. It carries out the reaction UDP-N-acetyl-alpha-D-muramate + NADP(+) = UDP-N-acetyl-3-O-(1-carboxyvinyl)-alpha-D-glucosamine + NADPH + H(+). It functions in the pathway cell wall biogenesis; peptidoglycan biosynthesis. In terms of biological role, cell wall formation. This is UDP-N-acetylenolpyruvoylglucosamine reductase from Rhizobium etli (strain CIAT 652).